The sequence spans 388 residues: Putative F-box/kelch-repeat protein At2g29820 (388 aa).

Residues 6 to 33 are disordered; sequence EILDGPNGDDPNNNPQEGEDNQNENPQE. Residues 9 to 21 show a composition bias toward low complexity; that stretch reads DGPNGDDPNNNPQ. Acidic residues predominate over residues 22 to 33; the sequence is EGEDNQNENPQE. In terms of domain architecture, F-box spans 38 to 84; the sequence is LRNLLELPEELIERLIAHIPRCYYPYISLVSRDFRQVITSDKLFRTR. Kelch repeat units lie at residues 140-187 and 189-233; these read KMYV…EIGG and IYVI…FSTY.

This is Putative F-box/kelch-repeat protein At2g29820 from Arabidopsis thaliana (Mouse-ear cress).